A 322-amino-acid chain; its full sequence is DNA-directed RNA polymerase subunit alpha (322 aa).

The tract at residues 1-229 (MNFVNNLFTL…KYFDLIFSFI (229 aa)) is alpha N-terminal domain (alpha-NTD). Residues 244–322 (NLNLKINSVY…NLNSKIEYDL (79 aa)) are alpha C-terminal domain (alpha-CTD).

The protein belongs to the RNA polymerase alpha chain family. Homodimer. The RNAP catalytic core consists of 2 alpha, 1 beta, 1 beta' and 1 omega subunit. When a sigma factor is associated with the core the holoenzyme is formed, which can initiate transcription.

The enzyme catalyses RNA(n) + a ribonucleoside 5'-triphosphate = RNA(n+1) + diphosphate. Its function is as follows. DNA-dependent RNA polymerase catalyzes the transcription of DNA into RNA using the four ribonucleoside triphosphates as substrates. This is DNA-directed RNA polymerase subunit alpha (rpoA) from Carsonella ruddii (strain PV).